Consider the following 617-residue polypeptide: Glutamine--fructose-6-phosphate aminotransferase [isomerizing] (617 aa).

Residue cysteine 2 is the Nucleophile; for GATase activity of the active site. The region spanning 2–222 (CGIIGLAFAE…DGEFGWISPE (221 aa)) is the Glutamine amidotransferase type-2 domain. 2 consecutive SIS domains span residues 293-432 (AAGL…EAGR) and 466-607 (AASL…PDKP). The active-site For Fru-6P isomerization activity is lysine 612.

In terms of assembly, homodimer.

It localises to the cytoplasm. It carries out the reaction D-fructose 6-phosphate + L-glutamine = D-glucosamine 6-phosphate + L-glutamate. Its function is as follows. Catalyzes the first step in hexosamine metabolism, converting fructose-6P into glucosamine-6P using glutamine as a nitrogen source. The protein is Glutamine--fructose-6-phosphate aminotransferase [isomerizing] of Aeropyrum pernix (strain ATCC 700893 / DSM 11879 / JCM 9820 / NBRC 100138 / K1).